A 757-amino-acid polypeptide reads, in one-letter code: 5-methyltetrahydropteroyltriglutamate--homocysteine methyltransferase (757 aa).

5-methyltetrahydropteroyltri-L-glutamate is bound by residues 16-19 (RELK) and Lys-112. L-homocysteine-binding positions include 433–435 (IGS) and Glu-486. L-methionine-binding positions include 433–435 (IGS) and Glu-486. 5-methyltetrahydropteroyltri-L-glutamate is bound by residues 517–518 (RC) and Trp-563. Asp-601 contacts L-homocysteine. Position 601 (Asp-601) interacts with L-methionine. Residue Glu-607 coordinates 5-methyltetrahydropteroyltri-L-glutamate. Zn(2+)-binding residues include His-643, Cys-645, and Glu-667. His-696 serves as the catalytic Proton donor. Cys-728 lines the Zn(2+) pocket.

This sequence belongs to the vitamin-B12 independent methionine synthase family. Zn(2+) is required as a cofactor.

The enzyme catalyses 5-methyltetrahydropteroyltri-L-glutamate + L-homocysteine = tetrahydropteroyltri-L-glutamate + L-methionine. Its pathway is amino-acid biosynthesis; L-methionine biosynthesis via de novo pathway; L-methionine from L-homocysteine (MetE route): step 1/1. Its function is as follows. Catalyzes the transfer of a methyl group from 5-methyltetrahydrofolate to homocysteine resulting in methionine formation. This is 5-methyltetrahydropteroyltriglutamate--homocysteine methyltransferase from Pasteurella multocida (strain Pm70).